The sequence spans 171 residues: Dual-action ribosomal maturation protein DarP (171 aa).

Residues 1–30 are disordered; that stretch reads MPKRPAENPEQSDDFVSKSQKKREMAERQE.

The protein belongs to the DarP family.

It is found in the cytoplasm. Member of a network of 50S ribosomal subunit biogenesis factors which assembles along the 30S-50S interface, preventing incorrect 23S rRNA structures from forming. Promotes peptidyl transferase center (PTC) maturation. In Idiomarina loihiensis (strain ATCC BAA-735 / DSM 15497 / L2-TR), this protein is Dual-action ribosomal maturation protein DarP.